We begin with the raw amino-acid sequence, 332 residues long: D-2-hydroxyacid dehydrogenase (NAD(+)) (332 aa).

Residues R237 and E266 contribute to the active site. The active-site Proton donor is the H298.

It belongs to the D-isomer specific 2-hydroxyacid dehydrogenase family. Monomer.

It catalyses the reaction a (2R)-2-hydroxycarboxylate + NAD(+) = a 2-oxocarboxylate + NADH + H(+). The enzyme catalyses (2R)-hydroxy-4-methylpentanoate + NAD(+) = 4-methyl-2-oxopentanoate + NADH + H(+). It participates in amino-acid degradation; L-leucine degradation. Functionally, involved in the reductive branch of L-leucine fermentation. Catalyzes the NADH-dependent reduction of 4-methyl-2-oxopentanoate (2-oxoisocaproate) to (R)-2-hydroxy-4-methylpentanoate ((R)-2-hydroxyisocaproate). For the reverse reaction, the enzyme accepts (R)- but not (S)-2-hydroxy-4-methylpentanoate. Can also use 2-oxopentanoate, 2-oxohexanoate and phenylpyruvate but not 2-oxoisovalerate and 2-oxobutyrate. Cannot use NADPH. The polypeptide is D-2-hydroxyacid dehydrogenase (NAD(+)) (Clostridioides difficile (Peptoclostridium difficile)).